The primary structure comprises 194 residues: Glycerol-3-phosphate acyltransferase (194 aa).

Helical transmembrane passes span Ala2–Ile22, Leu52–Ser72, Asp80–Phe100, Val112–Ala132, Tyr137–His157, and Tyr161–Ile181.

Belongs to the PlsY family. In terms of assembly, probably interacts with PlsX.

The protein localises to the cell inner membrane. The enzyme catalyses an acyl phosphate + sn-glycerol 3-phosphate = a 1-acyl-sn-glycero-3-phosphate + phosphate. The protein operates within lipid metabolism; phospholipid metabolism. Functionally, catalyzes the transfer of an acyl group from acyl-phosphate (acyl-PO(4)) to glycerol-3-phosphate (G3P) to form lysophosphatidic acid (LPA). This enzyme utilizes acyl-phosphate as fatty acyl donor, but not acyl-CoA or acyl-ACP. This Fusobacterium nucleatum subsp. nucleatum (strain ATCC 25586 / DSM 15643 / BCRC 10681 / CIP 101130 / JCM 8532 / KCTC 2640 / LMG 13131 / VPI 4355) protein is Glycerol-3-phosphate acyltransferase.